Reading from the N-terminus, the 355-residue chain is Alanine racemase (355 aa).

Catalysis depends on Lys34, which acts as the Proton acceptor; specific for D-alanine. An N6-(pyridoxal phosphate)lysine modification is found at Lys34. Arg133 serves as a coordination point for substrate. The Proton acceptor; specific for L-alanine role is filled by Tyr249. Residue Met297 participates in substrate binding.

It belongs to the alanine racemase family. Requires pyridoxal 5'-phosphate as cofactor.

It carries out the reaction L-alanine = D-alanine. Its pathway is amino-acid biosynthesis; D-alanine biosynthesis; D-alanine from L-alanine: step 1/1. Its function is as follows. Catalyzes the interconversion of L-alanine and D-alanine. May also act on other amino acids. The polypeptide is Alanine racemase (alr) (Rickettsia akari (strain Hartford)).